The primary structure comprises 368 residues: Biglycan (368 aa).

Positions 1–16 are cleaved as a signal peptide; that stretch reads MKVLLLLCSCILVIHA. A propeptide spanning residues 17–37 is cleaved from the precursor; sequence LPFEQRGFWDFSMDDGMAMMK. Intrachain disulfides connect cysteine 63–cysteine 69 and cysteine 67–cysteine 76. LRR repeat units lie at residues 82-102, 103-126, 127-150, 151-171, 172-195, 196-220, 221-241, 242-265, 266-289, 290-312, 313-342, and 343-368; these read TSIPKNLPKDTTLLDLQNNKI, TEIKKDDFKGLTNLYALVIVNNKI, SKINEKAFEPLQKMQKLYISKNNL, EEIPKNLPKSLVELRIHENKI, KKVPKGVFSGLKNMNCIEMGGNPL, ENGGIEAGAFDGLKLNYLRVSEAKL, SGIPKGLPSTLNELHLDNNKI, QAIEKEDLSQYASLYRLGLGHNNI, RMIENGSLSFMPVLRELHLDNNKL, SKVPPGLPDMKLLQVVYLHSNNI, TQVGVNDFCPIGFGVKRAYYNGISLFNNPV, and PYWEVQPATFRCVTDRLAIQFGNYRK. 2 N-linked (GlcNAc...) asparagine glycosylation sites follow: asparagine 270 and asparagine 311. Cysteine 321 and cysteine 354 are oxidised to a cystine.

It belongs to the small leucine-rich proteoglycan (SLRP) family. SLRP class I subfamily.

Its subcellular location is the secreted. The protein localises to the extracellular space. It is found in the extracellular matrix. May be involved in collagen fiber assembly. This chain is Biglycan (bgn), found in Xenopus laevis (African clawed frog).